A 176-amino-acid polypeptide reads, in one-letter code: Peptidyl-prolyl cis-trans isomerase cyp6 (176 aa).

The PPIase cyclophilin-type domain occupies 10–173 (FFDIAVNGQH…AKIEITDCGE (164 aa)).

The protein belongs to the cyclophilin-type PPIase family.

The catalysed reaction is [protein]-peptidylproline (omega=180) = [protein]-peptidylproline (omega=0). Functionally, PPIases accelerate the folding of proteins. It catalyzes the cis-trans isomerization of proline imidic peptide bonds in oligopeptides. The polypeptide is Peptidyl-prolyl cis-trans isomerase cyp6 (cyp6) (Rhizopus delemar (strain RA 99-880 / ATCC MYA-4621 / FGSC 9543 / NRRL 43880) (Mucormycosis agent)).